Here is a 374-residue protein sequence, read N- to C-terminus: Isocitrate dehydrogenase [NAD] catalytic subunit 5, mitochondrial (374 aa).

A mitochondrion-targeting transit peptide spans 1 to 44 (MTMAANLARRLIGNRSTQILGAVNSSSGAASSVARAFCSSTTPI). Substrate-binding residues include Arg127, Arg137, Arg158, and Asp245. Mg(2+) contacts are provided by Asp245, Asp269, and Asp273.

Belongs to the isocitrate and isopropylmalate dehydrogenases family. As to quaternary structure, heterooligomer of catalytic and regulatory subunits. It depends on Mg(2+) as a cofactor. Requires Mn(2+) as cofactor. In terms of tissue distribution, ubiquitous.

It is found in the mitochondrion. It carries out the reaction D-threo-isocitrate + NAD(+) = 2-oxoglutarate + CO2 + NADH. Its function is as follows. Performs an essential role in the oxidative function of the citric acid cycle. This chain is Isocitrate dehydrogenase [NAD] catalytic subunit 5, mitochondrial (IDH5), found in Arabidopsis thaliana (Mouse-ear cress).